Consider the following 342-residue polypeptide: DNA-directed RNA polymerase subunit alpha (342 aa).

Positions 1 to 238 (MESLNVNAKN…DQLNMFVNFD (238 aa)) are alpha N-terminal domain (alpha-NTD). The tract at residues 254-342 (FNKNLLRKVD…EMSKKLEEQI (89 aa)) is alpha C-terminal domain (alpha-CTD).

The protein belongs to the RNA polymerase alpha chain family. Homodimer. The RNAP catalytic core consists of 2 alpha, 1 beta, 1 beta' and 1 omega subunit. When a sigma factor is associated with the core the holoenzyme is formed, which can initiate transcription.

It catalyses the reaction RNA(n) + a ribonucleoside 5'-triphosphate = RNA(n+1) + diphosphate. Its function is as follows. DNA-dependent RNA polymerase catalyzes the transcription of DNA into RNA using the four ribonucleoside triphosphates as substrates. The protein is DNA-directed RNA polymerase subunit alpha of Pelagibacter ubique (strain HTCC1062).